Consider the following 140-residue polypeptide: Organic hydroperoxide resistance protein-like (140 aa).

This sequence belongs to the OsmC/Ohr family.

The sequence is that of Organic hydroperoxide resistance protein-like from Staphylococcus aureus (strain USA300).